A 440-amino-acid chain; its full sequence is MSFRSIVRDVRDGFGSLSRRGFEVRILGHRRGKSHGAVHELHDPVPVIQSSCWASLPPELLRDIIERLEESEATWPSRKHVVACAGVCRTWREMCKEIVKNPELCGKITFPISLRQPGPRDGTMQCFIRRDKSTQTYYLYLSLGSAVLVDNGKFLLSAKRNWHATCTEYVISMNANNLSRSTNTNIGKLRSNFLGTKFVIYDTHTPYNATSDSQSGKTSRRFSNKGTAKHPCSTYSIANISYELNVFGTRGPRRMCCLMHSIPASSLEAGGTVPSQPDSILAHSLNESSFRSVSFSKSSVMDHSMHFSSAQFSDISIGDGPRIGGRVLSDDEECKETPLILQNKAPRWHEQLQCWCLNFRGRVTVASVKNFQLIAATQPAAGAPTPSQPVPPPPPEHDKVILQFGKVAKDMFTMDYHYPLSAFQAFAISLSSFDTKLACE.

The F-box domain maps to 51 to 106 (SCWASLPPELLRDIIERLEESEATWPSRKHVVACAGVCRTWREMCKEIVKNPELCG).

It belongs to the TUB family. As to expression, ubiquitous.

The chain is Tubby-like F-box protein 13 (TULP13) from Oryza sativa subsp. japonica (Rice).